We begin with the raw amino-acid sequence, 352 residues long: GTPase Obg (352 aa).

The Obg domain maps to 1–159; sequence MQFIDQAEIQ…RMLRLELKLL (159 aa). Residues 160–330 enclose the OBG-type G domain; it reads AEVGIIGLPN…LMQEIWGLLE (171 aa). Residues 166-173, 191-195, 213-216, 280-283, and 311-313 contribute to the GTP site; these read GLPNAGKS, FTTLV, DIPG, NKVD, and SAV. 2 residues coordinate Mg(2+): serine 173 and threonine 193.

Belongs to the TRAFAC class OBG-HflX-like GTPase superfamily. OBG GTPase family. As to quaternary structure, monomer. Mg(2+) serves as cofactor.

It localises to the cytoplasm. Its function is as follows. An essential GTPase which binds GTP, GDP and possibly (p)ppGpp with moderate affinity, with high nucleotide exchange rates and a fairly low GTP hydrolysis rate. Plays a role in control of the cell cycle, stress response, ribosome biogenesis and in those bacteria that undergo differentiation, in morphogenesis control. The protein is GTPase Obg of Trichodesmium erythraeum (strain IMS101).